The following is a 263-amino-acid chain: Post-GPI attachment to proteins factor 2 (263 aa).

Helical transmembrane passes span 16 to 36, 69 to 89, 109 to 129, 143 to 163, 180 to 200, and 208 to 228; these read FVICIGGLPSSALLICVILSL, YIWRILIGLHIGPRLVVAIAF, FLCNLACFLNLLENFFLLALT, CFGGFAICSIIYMLLSTWLFN, YKILGAAIFVLCFFLGAYLYW, and PGIYTLFALVEYSAVLSNIFF.

It belongs to the PGAP2 family.

It is found in the golgi apparatus membrane. It localises to the endoplasmic reticulum membrane. Involved in the lipid remodeling steps of GPI-anchor maturation. Required for stable expression of GPI-anchored proteins at the cell surface. The sequence is that of Post-GPI attachment to proteins factor 2 from Caenorhabditis elegans.